The following is a 319-amino-acid chain: Acetyl-coenzyme A carboxylase carboxyl transferase subunit alpha (319 aa).

The CoA carboxyltransferase C-terminal domain maps to 39-293 (RLQKKSNDLT…KAVLEKQLHE (255 aa)).

This sequence belongs to the AccA family. As to quaternary structure, acetyl-CoA carboxylase is a heterohexamer composed of biotin carboxyl carrier protein (AccB), biotin carboxylase (AccC) and two subunits each of ACCase subunit alpha (AccA) and ACCase subunit beta (AccD).

The protein localises to the cytoplasm. It catalyses the reaction N(6)-carboxybiotinyl-L-lysyl-[protein] + acetyl-CoA = N(6)-biotinyl-L-lysyl-[protein] + malonyl-CoA. It functions in the pathway lipid metabolism; malonyl-CoA biosynthesis; malonyl-CoA from acetyl-CoA: step 1/1. Functionally, component of the acetyl coenzyme A carboxylase (ACC) complex. First, biotin carboxylase catalyzes the carboxylation of biotin on its carrier protein (BCCP) and then the CO(2) group is transferred by the carboxyltransferase to acetyl-CoA to form malonyl-CoA. The chain is Acetyl-coenzyme A carboxylase carboxyl transferase subunit alpha from Neisseria meningitidis serogroup A / serotype 4A (strain DSM 15465 / Z2491).